A 939-amino-acid polypeptide reads, in one-letter code: Translation initiation factor IF-2 (939 aa).

2 disordered regions span residues Leu51 to Lys81 and Val137 to Ala353. Residues Asn181–Lys210 are compositionally biased toward basic and acidic residues. Positions Pro259–Gly277 are enriched in low complexity. Residues Arg300–Pro312 show a composition bias toward basic and acidic residues. In terms of domain architecture, tr-type G spans Gly437 to Lys606. A G1 region spans residues Gly446 to Thr453. Position 446-453 (Gly446–Thr453) interacts with GTP. The G2 stretch occupies residues Gly471–His475. A G3 region spans residues Asp492–Gly495. GTP-binding positions include Asp492 to His496 and Asn546 to Asp549. Residues Asn546 to Asp549 are G4. Residues Ser582–Lys584 are G5.

The protein belongs to the TRAFAC class translation factor GTPase superfamily. Classic translation factor GTPase family. IF-2 subfamily.

The protein localises to the cytoplasm. Its function is as follows. One of the essential components for the initiation of protein synthesis. Protects formylmethionyl-tRNA from spontaneous hydrolysis and promotes its binding to the 30S ribosomal subunits. Also involved in the hydrolysis of GTP during the formation of the 70S ribosomal complex. The polypeptide is Translation initiation factor IF-2 (Desulfotalea psychrophila (strain LSv54 / DSM 12343)).